We begin with the raw amino-acid sequence, 272 residues long: MEKIKIIVASDSIGETAELVARAGISQFNPKQCKNELLRYPYIESFEDVDEVIQVAKDTNAIIVYTLIKPEMKQYMSEKVAEFQLKSVDIMGPLMDLLSASVEEKPYNEPGIVHRLDDAYFKKIDAIEFAVKYDDGKDPKGLPKADIVLLGISRTSKTPLSQYLAHKSYKVMNVPIVPEVTPPDGLYDINPKKCIALKISEEKLNRIRKERLKQLGLGDTARYATEARIQEELNYFEEIVSEIGCPVIDVSQKAIEETANDIIHYIEQNKSK.

G151 to T158 contacts ADP.

It belongs to the pyruvate, phosphate/water dikinase regulatory protein family. PDRP subfamily.

It catalyses the reaction N(tele)-phospho-L-histidyl/L-threonyl-[pyruvate, phosphate dikinase] + ADP = N(tele)-phospho-L-histidyl/O-phospho-L-threonyl-[pyruvate, phosphate dikinase] + AMP + H(+). The enzyme catalyses N(tele)-phospho-L-histidyl/O-phospho-L-threonyl-[pyruvate, phosphate dikinase] + phosphate + H(+) = N(tele)-phospho-L-histidyl/L-threonyl-[pyruvate, phosphate dikinase] + diphosphate. Bifunctional serine/threonine kinase and phosphorylase involved in the regulation of the pyruvate, phosphate dikinase (PPDK) by catalyzing its phosphorylation/dephosphorylation. The chain is Putative pyruvate, phosphate dikinase regulatory protein from Staphylococcus aureus (strain USA300).